Consider the following 171-residue polypeptide: Iron-sulfur cluster assembly protein 3 (171 aa).

The N-terminal 49 residues, 1-49 (MLRQTTKRAFLGLASQNPTPFPVVSRLYHPNVIDHYDNPRNVGSFDKND), are a transit peptide targeting the mitochondrion.

This sequence belongs to the NifU family. As to quaternary structure, component of the core Fe-S cluster (ISC) assembly machinery. The cofactor is [2Fe-2S] cluster. As to expression, mostly expressed in flowers and pollen, and, to a lower extent, in leaves and roots.

Its subcellular location is the mitochondrion matrix. It functions in the pathway cofactor biosynthesis; iron-sulfur cluster biosynthesis. In terms of biological role, scaffold protein for the de novo synthesis of iron-sulfur (Fe-S) clusters within mitochondria, which is required for maturation of both mitochondrial and cytoplasmic [2Fe-2S] and [4Fe-4S] proteins. First, a [2Fe-2S] cluster is transiently assembled on the scaffold protein ISCU (ISU1, ISU2 or ISU3). In a second step, the cluster is released from ISCU, transferred to a glutaredoxin, followed by the formation of mitochondrial [2Fe-2S] proteins, the synthesis of [4Fe-4S] clusters and their target-specific insertion into the recipient apoproteins. Cluster assembly on ISCU depends on the function of the cysteine desulfurase complex NFS1-ISD11, which serves as the sulfur donor for cluster synthesis, the iron-binding protein frataxin as the putative iron donor, and the electron transfer chain comprised of ferredoxin reductase and ferredoxin, which receive their electrons from NADH. The sequence is that of Iron-sulfur cluster assembly protein 3 (ISU3) from Arabidopsis thaliana (Mouse-ear cress).